The primary structure comprises 227 residues: Type II restriction enzyme ScaI (227 aa).

The disordered stretch occupies residues 12–35; sequence EARVGTRTGGPAMRPKTSDSPYFG.

It catalyses the reaction Endonucleolytic cleavage of DNA to give specific double-stranded fragments with terminal 5'-phosphates.. Functionally, a P subtype restriction enzyme that recognizes the double-stranded sequence 5'-AGTACT-3' and cleaves after T-3. In Streptomyces caespitosus, this protein is Type II restriction enzyme ScaI.